Reading from the N-terminus, the 258-residue chain is Ribosomal RNA small subunit methyltransferase A (258 aa).

Residues H9, L11, G36, E57, D83, and N102 each contribute to the S-adenosyl-L-methionine site.

The protein belongs to the class I-like SAM-binding methyltransferase superfamily. rRNA adenine N(6)-methyltransferase family. RsmA subfamily.

It is found in the cytoplasm. The enzyme catalyses adenosine(1518)/adenosine(1519) in 16S rRNA + 4 S-adenosyl-L-methionine = N(6)-dimethyladenosine(1518)/N(6)-dimethyladenosine(1519) in 16S rRNA + 4 S-adenosyl-L-homocysteine + 4 H(+). In terms of biological role, specifically dimethylates two adjacent adenosines (A1518 and A1519) in the loop of a conserved hairpin near the 3'-end of 16S rRNA in the 30S particle. May play a critical role in biogenesis of 30S subunits. The chain is Ribosomal RNA small subunit methyltransferase A from Caulobacter vibrioides (strain ATCC 19089 / CIP 103742 / CB 15) (Caulobacter crescentus).